The chain runs to 153 residues: MARVTDKITHLIKPVIEGMGYELLGIEYVASGKYSILRIFIDTNKSISVNDCEIVSRQLSSIFDIEEPISGQYNLEVSSPGIERPLFHKGHYQCFLGFNVKLHMFRPISGQSNFFGVIGSVSEINNTIELVGELGAIILDIDLIKKANLVVDF.

The protein belongs to the RimP family.

It localises to the cytoplasm. Required for maturation of 30S ribosomal subunits. The sequence is that of Ribosome maturation factor RimP from Vesicomyosocius okutanii subsp. Calyptogena okutanii (strain HA).